The following is a 37-amino-acid chain: Large ribosomal subunit protein bL36c (37 aa).

Belongs to the bacterial ribosomal protein bL36 family.

The protein resides in the plastid. The chain is Large ribosomal subunit protein bL36c from Cuscuta exaltata (Tall dodder).